A 77-amino-acid chain; its full sequence is U3-theraphotoxin-Hhn1k (77 aa).

The N-terminal stretch at 1–14 (TFAGLVLLFVVCYA) is a signal peptide. Positions 15–42 (SESEEKEFPKEMLSSIFAVDNDFKQEER) are excised as a propeptide. Intrachain disulfides connect cysteine 44-cysteine 57 and cysteine 56-cysteine 69.

Belongs to the neurotoxin 10 (Hwtx-1) family. 51 (Hntx-8) subfamily. Hntx-8 sub-subfamily. Expressed by the venom gland.

The protein localises to the secreted. Its function is as follows. Ion channel inhibitor. The protein is U3-theraphotoxin-Hhn1k of Cyriopagopus hainanus (Chinese bird spider).